We begin with the raw amino-acid sequence, 375 residues long: Probable aminomethyltransferase (375 aa).

This sequence belongs to the GcvT family. In terms of assembly, the glycine cleavage system is composed of four proteins: P, T, L and H.

The catalysed reaction is N(6)-[(R)-S(8)-aminomethyldihydrolipoyl]-L-lysyl-[protein] + (6S)-5,6,7,8-tetrahydrofolate = N(6)-[(R)-dihydrolipoyl]-L-lysyl-[protein] + (6R)-5,10-methylene-5,6,7,8-tetrahydrofolate + NH4(+). In terms of biological role, the glycine cleavage system catalyzes the degradation of glycine. The chain is Probable aminomethyltransferase from Aeropyrum pernix (strain ATCC 700893 / DSM 11879 / JCM 9820 / NBRC 100138 / K1).